A 302-amino-acid chain; its full sequence is 4-hydroxy-tetrahydrodipicolinate synthase (302 aa).

Pyruvate is bound at residue Thr55. Residue Tyr144 is the Proton donor/acceptor of the active site. Lys172 acts as the Schiff-base intermediate with substrate in catalysis. Val214 is a pyruvate binding site.

The protein belongs to the DapA family. Homotetramer; dimer of dimers.

The protein localises to the cytoplasm. It catalyses the reaction L-aspartate 4-semialdehyde + pyruvate = (2S,4S)-4-hydroxy-2,3,4,5-tetrahydrodipicolinate + H2O + H(+). It participates in amino-acid biosynthesis; L-lysine biosynthesis via DAP pathway; (S)-tetrahydrodipicolinate from L-aspartate: step 3/4. Catalyzes the condensation of (S)-aspartate-beta-semialdehyde [(S)-ASA] and pyruvate to 4-hydroxy-tetrahydrodipicolinate (HTPA). The chain is 4-hydroxy-tetrahydrodipicolinate synthase from Prochlorococcus marinus (strain SARG / CCMP1375 / SS120).